Reading from the N-terminus, the 595-residue chain is uncharacterized protein (595 aa).

Transmembrane regions (helical) follow at residues 64 to 84 (VVFLTSIILGLIIFIIFLIVF), 86 to 106 (IFYAIFGLIGGIFIVILIGVL), 239 to 259 (FYVIACGMIPLFVVMTVPVAS), 281 to 301 (FYLWVPIASIIFMGLVYGILP), 334 to 354 (VHFITLFFWMLSIISFMLFFI), 368 to 388 (MFGILFLILPFILTSYWHFII), 504 to 524 (FIYVVVIYLSFFLYIGTSYIM), 547 to 567 (YLFQGILIYSIFSGASLGILT), and 571 to 591 (IIAGIKHILLMLIVGYMLFKF).

It to M.jannaschii FlaJ.

The protein resides in the cell membrane. This is an uncharacterized protein from Methanocaldococcus jannaschii (strain ATCC 43067 / DSM 2661 / JAL-1 / JCM 10045 / NBRC 100440) (Methanococcus jannaschii).